A 301-amino-acid polypeptide reads, in one-letter code: Mitochondrial import receptor subunit TOM40 homolog (301 aa).

Positions 1 to 20 (MATPTESEFAAPIPQTNPGS) are disordered.

This sequence belongs to the Tom40 family. As to quaternary structure, forms part of the preprotein translocase complex of the outer mitochondrial membrane (TOM complex). Interacts with mitochondrial targeting sequences.

It is found in the mitochondrion outer membrane. Channel-forming protein essential for import of protein precursors into mitochondria. Specifically required for nnt-1 accumulation in the mitochondria and may be involved in the secretion of daf-28/insulin from the mitochondria. Required for embryonic and larval development. In Caenorhabditis briggsae, this protein is Mitochondrial import receptor subunit TOM40 homolog.